The following is a 484-amino-acid chain: MPKKEKKAKTPLSDEEQLLLFQQKLLTEEEMAKKKERLLSQFLKDKLAKEEHNSALNLNKINTQWRTVLREVKTRELHKDIEILSQTFERVVDCKDNVIKSLAKDLSEAEEQYARALRSHLHSVDQLLALQRHRLSLLEESYNMELEALTKEFETERKTIIDQHEKEIHYLQDIFMAMEQNYIDSEYESKLEFQSMWNDLKNMNLEEKHFLRLHLENIVEDLWRKFQDVLKNYTDATEDRKAAFETLQVKDEKSSKEIEVQMKKIQKLQDAITISKGKIMIHSRESEDENRYIRNDKELVLVQLRKLKAQRTQARAASQKNLVKLTLESNATLKALRKIVDKGEKILKLAEICRKFETEEEKVLPFYSSVLTPKEQEGIEENNLEELTEELAKVMVDYTGMENFWKRYNKVKLEQLSLQHRRAQLLDINGKLREMLKQYLDGISVSDEVLSQLNPLFIVNYQSNLPQPLSIPIAHPGDKQHPTT.

Coiled coils occupy residues 92–160 (VDCK…RKTI) and 374–403 (KEQE…GMEN).

It belongs to the DRC2 family. Component of the nexin-dynein regulatory complex (N-DRC). Interacts with DRC1.

It is found in the cytoplasm. It localises to the cytoskeleton. Its subcellular location is the flagellum basal body. The protein localises to the cell projection. The protein resides in the cilium. It is found in the flagellum. It localises to the flagellum axoneme. Component of the nexin-dynein regulatory complex (N-DRC), a key regulator of ciliary/flagellar motility which maintains the alignment and integrity of the distal axoneme and regulates microtubule sliding in motile axonemes. Plays a critical role in the assembly of N-DRC and also stabilizes the assembly of multiple inner dynein arms and radial spokes. Coassembles with DRC1 to form a central scaffold needed for assembly of the N-DRC and its attachment to the outer doublet microtubules. The polypeptide is Dynein regulatory complex subunit 2 (CCDC65) (Macaca fascicularis (Crab-eating macaque)).